The following is a 303-amino-acid chain: Endo-1,3;1,4-beta-D-glucanase (303 aa).

Residues 1-43 form the signal peptide; it reads MPSSAQVLLCLAAVLAAAAATTAEAHSQCLDNPPDRSIHGRQL. Asn115, Asn197, and Asn257 each carry an N-linked (GlcNAc...) asparagine glycan.

Glycosylated.

The protein localises to the secreted. Plays a role in control of plant growth. Mediates specific degradation of cell wall (1,3)(1,4)-beta-D-glucans and is related to auxin-mediated growth and development of cereal coleoptiles. The sequence is that of Endo-1,3;1,4-beta-D-glucanase from Zea mays (Maize).